Here is a 336-residue protein sequence, read N- to C-terminus: F420-dependent glucose-6-phosphate dehydrogenase (336 aa).

Coenzyme F420-(gamma-Glu)n is bound at residue aspartate 39. The active-site Proton donor is the histidine 40. Residues threonine 76 and 107–108 contribute to the coenzyme F420-(gamma-Glu)n site; that span reads TG. Catalysis depends on glutamate 109, which acts as the Proton acceptor. Residues asparagine 112, 177–178, and 180–181 contribute to the coenzyme F420-(gamma-Glu)n site; these read GG and AV. Residues threonine 195, lysine 198, lysine 259, and arginine 283 each contribute to the substrate site.

Belongs to the F420-dependent glucose-6-phosphate dehydrogenase family. In terms of assembly, homodimer.

The enzyme catalyses oxidized coenzyme F420-(gamma-L-Glu)(n) + D-glucose 6-phosphate + H(+) = 6-phospho-D-glucono-1,5-lactone + reduced coenzyme F420-(gamma-L-Glu)(n). Functionally, catalyzes the coenzyme F420-dependent oxidation of glucose 6-phosphate (G6P) to 6-phosphogluconolactone. Appears to have a role in resistance to oxidative stress, via its consumption of G6P that serves as a source of reducing power to combat oxidative stress in mycobacteria. The protein is F420-dependent glucose-6-phosphate dehydrogenase of Mycobacterium avium (strain 104).